A 459-amino-acid polypeptide reads, in one-letter code: Phosphomethylpyrimidine synthase (459 aa).

Residues asparagine 80, methionine 109, tyrosine 139, histidine 175, 195–197 (SRG), 236–239 (DSLR), and glutamate 275 each bind substrate. Residue histidine 279 coordinates Zn(2+). Substrate is bound at residue tyrosine 302. Histidine 343 is a binding site for Zn(2+). Residues cysteine 423, cysteine 426, and cysteine 431 each contribute to the [4Fe-4S] cluster site.

It belongs to the ThiC family. The cofactor is [4Fe-4S] cluster.

It catalyses the reaction 5-amino-1-(5-phospho-beta-D-ribosyl)imidazole + S-adenosyl-L-methionine = 4-amino-2-methyl-5-(phosphooxymethyl)pyrimidine + CO + 5'-deoxyadenosine + formate + L-methionine + 3 H(+). Its pathway is cofactor biosynthesis; thiamine diphosphate biosynthesis. Catalyzes the synthesis of the hydroxymethylpyrimidine phosphate (HMP-P) moiety of thiamine from aminoimidazole ribotide (AIR) in a radical S-adenosyl-L-methionine (SAM)-dependent reaction. In Synechocystis sp. (strain ATCC 27184 / PCC 6803 / Kazusa), this protein is Phosphomethylpyrimidine synthase.